A 3317-amino-acid polypeptide reads, in one-letter code: Cadherin-23 (3317 aa).

The signal sequence occupies residues 1–23 (MRHPPVTWCAMLWLLMLVSGSWG). Residues 24–3062 (QVNRLPFFTN…SVQLPDDMSA (3039 aa)) lie on the Extracellular side of the membrane. Cadherin domains lie at 34 to 132 (HFFD…APTF), 133 to 236 (HNQP…DPIF), 237 to 348 (INLP…APEF), 349 to 458 (NSSE…RPIF), 459 to 559 (SQPL…VPTF), 560 to 669 (QKDA…PPTF), 670 to 782 (SKPA…APYY), 777 to 888 (KDAP…DPTF), 889 to 993 (QNLP…TPTF), 994 to 1100 (FPAV…RPIF), 1101 to 1206 (LQSS…APVF), 1208 to 1311 (QQQY…AVQF), 1312 to 1416 (SNAS…SPRF), 1418 to 1525 (FTSD…PPVI), 1527 to 1632 (SPFG…APVF), 1633 to 1742 (QQPH…VPTF), 1743 to 1849 (PRDY…DPVL), 1850 to 1957 (LNLP…HPLF), 1958 to 2067 (TEGT…WPTF), 2068 to 2172 (SPPA…RPEF), 2173 to 2291 (LNPI…TPQF), 2295 to 2400 (GITY…NPIF), 2401 to 2507 (DQLS…RPQF), 2508 to 2609 (SKPQ…RPVF), 2612 to 2720 (PPNG…EPLF), 2727 to 2844 (SPQY…PPRF), and 2845 to 2973 (TKAE…EEEF). N-linked (GlcNAc...) asparagine glycosylation is found at Asn-155 and Asn-206. 32 N-linked (GlcNAc...) asparagine glycosylation sites follow: Asn-349, Asn-391, Asn-432, Asn-464, Asn-470, Asn-600, Asn-692, Asn-763, Asn-808, Asn-825, Asn-939, Asn-999, Asn-1016, Asn-1169, Asn-1280, Asn-1313, Asn-1471, Asn-1532, Asn-1649, Asn-1665, Asn-1816, Asn-1855, Asn-1887, Asn-1900, Asn-2012, Asn-2048, Asn-2127, Asn-2166, Asn-2193, Asn-2261, Asn-2355, and Asn-2367. Residues Asn-2576, Asn-2614, Asn-2747, Asn-2806, Asn-2875, Asn-2894, Asn-2939, and Asn-2979 are each glycosylated (N-linked (GlcNAc...) asparagine). Residues 3063-3083 (LQMAIIVLAILLFLAAMLFVL) traverse the membrane as a helical segment. Over 3084–3317 (MNWYYRTIHK…MESPLEITEL (234 aa)) the chain is Cytoplasmic.

As to quaternary structure, antiparallel heterodimer with PCDH15. Interacts with USH1C and USH1G.

The protein localises to the cell membrane. Cadherins are calcium-dependent cell adhesion proteins. They preferentially interact with themselves in a homophilic manner in connecting cells. CDH23 is required for establishing and/or maintaining the proper organization of the stereocilia bundle of hair cells in the cochlea and the vestibule during late embryonic/early postnatal development. It is part of the functional network formed by USH1C, USH1G, CDH23 and MYO7A that mediates mechanotransduction in cochlear hair cells. Required for normal hearing. This Rattus norvegicus (Rat) protein is Cadherin-23 (Cdh23).